The sequence spans 516 residues: GMP synthase [glutamine-hydrolyzing] (516 aa).

In terms of domain architecture, Glutamine amidotransferase type-1 spans 8 to 198; that stretch reads KILILDFGSQ…VVNICGCDTL (191 aa). Cys-84 serves as the catalytic Nucleophile. Active-site residues include His-172 and Glu-174. The GMPS ATP-PPase domain maps to 199-391; it reads WNIENIIEND…LGLPYNMLYR (193 aa). Position 226–232 (226–232) interacts with ATP; the sequence is SGGVDSS.

As to quaternary structure, homodimer.

The enzyme catalyses XMP + L-glutamine + ATP + H2O = GMP + L-glutamate + AMP + diphosphate + 2 H(+). It participates in purine metabolism; GMP biosynthesis; GMP from XMP (L-Gln route): step 1/1. Its function is as follows. Catalyzes the synthesis of GMP from XMP. This is GMP synthase [glutamine-hydrolyzing] from Francisella tularensis subsp. novicida (strain U112).